A 45-amino-acid chain; its full sequence is Iota-conotoxin-like R11.10 (45 aa).

Cystine bridges form between cysteine 5-cysteine 19, cysteine 12-cysteine 22, cysteine 18-cysteine 27, and cysteine 21-cysteine 36. The residue at position 43 (leucine 43) is a D-leucine. Residue arginine 45 is a propeptide, removed by a carboxypeptidase.

This sequence belongs to the conotoxin I1 superfamily. As to expression, expressed by the venom duct.

The protein resides in the secreted. Functionally, iota-conotoxins bind to voltage-gated sodium channels (Nav) and act as agonists by shifting the voltage-dependence of activation to more hyperpolarized levels. Produces general excitatory symptoms. This chain is Iota-conotoxin-like R11.10, found in Conus radiatus (Rayed cone).